Reading from the N-terminus, the 85-residue chain is ATP synthase subunit c (85 aa).

The next 2 membrane-spanning stretches (helical) occupy residues 10-30 and 53-73; these read IAVG…FALL and FIIA…ALLF.

It belongs to the ATPase C chain family. In terms of assembly, F-type ATPases have 2 components, F(1) - the catalytic core - and F(0) - the membrane proton channel. F(1) has five subunits: alpha(3), beta(3), gamma(1), delta(1), epsilon(1). F(0) has three main subunits: a(1), b(2) and c(10-14). The alpha and beta chains form an alternating ring which encloses part of the gamma chain. F(1) is attached to F(0) by a central stalk formed by the gamma and epsilon chains, while a peripheral stalk is formed by the delta and b chains.

The protein resides in the cell inner membrane. Functionally, f(1)F(0) ATP synthase produces ATP from ADP in the presence of a proton or sodium gradient. F-type ATPases consist of two structural domains, F(1) containing the extramembraneous catalytic core and F(0) containing the membrane proton channel, linked together by a central stalk and a peripheral stalk. During catalysis, ATP synthesis in the catalytic domain of F(1) is coupled via a rotary mechanism of the central stalk subunits to proton translocation. In terms of biological role, key component of the F(0) channel; it plays a direct role in translocation across the membrane. A homomeric c-ring of between 10-14 subunits forms the central stalk rotor element with the F(1) delta and epsilon subunits. This chain is ATP synthase subunit c, found in Aliivibrio fischeri (strain ATCC 700601 / ES114) (Vibrio fischeri).